We begin with the raw amino-acid sequence, 189 residues long: Elongation factor P (189 aa).

This sequence belongs to the elongation factor P family.

It is found in the cytoplasm. It participates in protein biosynthesis; polypeptide chain elongation. Involved in peptide bond synthesis. Stimulates efficient translation and peptide-bond synthesis on native or reconstituted 70S ribosomes in vitro. Probably functions indirectly by altering the affinity of the ribosome for aminoacyl-tRNA, thus increasing their reactivity as acceptors for peptidyl transferase. The polypeptide is Elongation factor P (Pseudomonas entomophila (strain L48)).